Reading from the N-terminus, the 328-residue chain is Cytochrome c biogenesis protein CcsA (328 aa).

8 helical membrane-spanning segments follow: residues 13 to 33, 46 to 66, 73 to 93, 101 to 121, 146 to 166, 234 to 254, 263 to 283, and 295 to 315; these read ISFS…LVNL, GIVI…IYSG, LYES…VSYF, LNAI…SGLL, MILG…LLVI, IISL…VWAN, WDPK…YLHI, and AIVA…VNLL.

It belongs to the CcmF/CycK/Ccl1/NrfE/CcsA family. In terms of assembly, may interact with Ccs1.

It localises to the plastid. The protein resides in the chloroplast thylakoid membrane. Its function is as follows. Required during biogenesis of c-type cytochromes (cytochrome c6 and cytochrome f) at the step of heme attachment. This chain is Cytochrome c biogenesis protein CcsA, found in Barbarea verna (Land cress).